The sequence spans 243 residues: MAHANKNHIESFPPPGKKITIVFVIGGPGSGKGTQCAKIVKQFGFTHLSAGDLLREEAKYDTEQGTMIKNLMNEGKLVSSDLIVKLLFKAMRESGNDKFLVDGFPRNEENRHAYENIIHIEPEFLLFIDCSKEEMERRILNRNQGRDDDNIDTIRRRFDVFQQQTLPVIQYYEKRGKLRKVDGNRQVDEVFEDVKAIFAQLNNQKIHGGQQASGLSRAQMNPLKRWFFDFFCGCFGTKEEARN.

An ATP-binding site is contributed by 29–34 (GSGKGT). The NMP stretch occupies residues 49-78 (SAGDLLREEAKYDTEQGTMIKNLMNEGKLV). A ribonucleoside 5'-phosphate-binding positions include R55, 76-78 (KLV), and 103-106 (GFPR). N110 provides a ligand contact to CMP. Residues 141–149 (NRNQGRDDD) are LID. ATP is bound at residue R142. A ribonucleoside 5'-phosphate contacts are provided by R146 and R157. Residue R185 participates in ATP binding.

Belongs to the adenylate kinase family. UMP-CMP kinase subfamily. In terms of assembly, monomer. Requires Mg(2+) as cofactor.

It is found in the cytoplasm. It localises to the nucleus. It carries out the reaction UMP + ATP = UDP + ADP. The catalysed reaction is CMP + ATP = CDP + ADP. It catalyses the reaction dCMP + ATP = dCDP + ADP. Functionally, catalyzes the phosphorylation of pyrimidine nucleoside monophosphates at the expense of ATP. Plays an important role in de novo pyrimidine nucleotide biosynthesis. Has preference for UMP and CMP as phosphate acceptors. This is UMP-CMP kinase 1 from Oryza sativa subsp. japonica (Rice).